Consider the following 175-residue polypeptide: Endoribonuclease YbeY (175 aa).

3 residues coordinate Zn(2+): His-137, His-141, and His-147.

It belongs to the endoribonuclease YbeY family. Requires Zn(2+) as cofactor.

The protein localises to the cytoplasm. In terms of biological role, single strand-specific metallo-endoribonuclease involved in late-stage 70S ribosome quality control and in maturation of the 3' terminus of the 16S rRNA. The sequence is that of Endoribonuclease YbeY from Burkholderia ambifaria (strain ATCC BAA-244 / DSM 16087 / CCUG 44356 / LMG 19182 / AMMD) (Burkholderia cepacia (strain AMMD)).